We begin with the raw amino-acid sequence, 289 residues long: Cbb3-type cytochrome c oxidase subunit FixP (289 aa).

The Cytoplasmic segment spans residues 1–33; sequence MADKHKHVDEVSGVETTGHEWDGIRELNNPLPR. The chain crosses the membrane as a helical span at residues 34-56; that stretch reads WWVYSFYATIIWAIGYAVAYPSW. At 57 to 289 the chain is on the periplasmic side; sequence PMLTEATKGV…VFVHSLGGGE (233 aa). Cytochrome c domains lie at 110 to 198 and 205 to 286; these read FAVS…MSLT and HLVE…HSLG. Heme c-binding residues include cysteine 123, cysteine 126, histidine 127, methionine 175, cysteine 218, cysteine 221, histidine 222, and methionine 263.

It belongs to the CcoP / FixP family. As to quaternary structure, component of the cbb3-type cytochrome c oxidase at least composed of FixN, FixO, FixQ and FixP. It depends on heme c as a cofactor.

The protein localises to the cell inner membrane. Its pathway is energy metabolism; oxidative phosphorylation. In terms of biological role, C-type cytochrome. Part of the cbb3-type cytochrome c oxidase complex. FixP subunit is required for transferring electrons from donor cytochrome c via its heme groups to FixO subunit. From there, electrons are shuttled to the catalytic binuclear center of FixN subunit where oxygen reduction takes place. The complex also functions as a proton pump. This is Cbb3-type cytochrome c oxidase subunit FixP from Sinorhizobium medicae (strain WSM419) (Ensifer medicae).